A 1624-amino-acid chain; its full sequence is MRLWSWVLRLGLLSAALGCGLAERPRRVRRDPRAVRPPRPAAGPATCATRAARGRRASPPPPPGGAWEAVRVPRRRQQRAARGAEEPSPPSRALYFSGRGEQLRLRADLELPRDAFTLQVWLRAEGGQKSPAVITGLYDKCSYTSRDRGWVMGIHTTSDQGNRDPRYFFSLKTDRARKVTTIDAHRSYLPGQWVHLAATYDGRLMKLYMNGAQVATSAEQVGGIFSPLTQKCKVLMLGGSALNHNFRGHIEHFSLWKVARTQREIVSDMETRGLHTPLPQLLLQENWDNVKRTWSPMKDGNSPQVEFSNAHGFLLDTNLEPPLCGQTLCDNTEVISSYNQLPSFRQPKVVRYRVVNIYDDHHENPTVSWQQIDFQHQQLAEAFQHYNISWELEVLNINSSSLRHRLILANCDISKIGDEKCDPECNHTLTGHDGGDCRQLRYPAFMKKQQNGVCDMDCNYERFNFDGGECCDPDITDVTKTCFDPDSPHRAYLDVNELKNILRLDGSTHLNIFFANSSEEELAGVATWPWDKEALMHLGGIVLNPSFYGIPGHTHTMIHEIGHSLGLYHIFRGISEIQSCSDPCMETEPSFETGDLCNDTNPAPKHKFCGDPGPGNDTCGFHGFFNTPYNNFMSYADDDCTDSFTPNQVSRMHCYLDLVYQSWQPSRKPAPVALAPQVVGHTMDSVMLEWFPPIDGHFFERELGSACDLCLEGRILVQYAFNASSPMPCGPSGHWSPREAEGHPDVEQPCKSSVRTWSPNSAVNPHTVPPACPEPQGCYLELEFRYPLVPESLTIWVTFVSSDWDSSGAVNDIKLLTISGKNISLGPQNVFCDIPLTIRLRDVGEEVYGIQIYTLDEHLEIDAAMLTSTVDSPLCLQCKPLQYKVLRDPPLLEDVASLLHLNRRFMDTDLKLGSVYQYRIITISGNEESEPSPAAIYTHGSGYCGDGVIQKDQGEECDDMNKVNGDGCSLFCKQEVSFNCIDEPSRCYFHDGDGMCEEFEQKTSIKDCGVYTPQGFLDQWASNASVSHQDQQCPGWVVIGQPAASQVCRTKVIDLSEGISQHAWYPCTITYPYYHLPQTTFWLQTYFSQPMVAAAVIIHLVTDGTYYGDQKQETISVQLLDTKDQSHDLGLHVLSCRNNPLIIPVVHDLSQPFYHSQAVHVSFSSPLVAISGVALRSFDNFDPVTLSSCQRGETYSPAEQSCVHFACQAADCPELAVGNASLNCSSNHHYHGAQCTVSCQTGYVLQIQRDDELIKSQVGPSITVTCTEGKWNKQVACEPVDCGIPDHHHVYAASFSCPEGTTFGRRCSFQCRHPAQLKGNNSFLTCMEDGLWSFPEALCELMCLAPPPVPNADLQTARCRENKHKVGSFCKYKCKPGYHVPGSSRKSKKRAFKTQCTQDGSWQEGTCVPVTCDPPPPKFHGLYQCTNGFQFNSECRIKCEDSDASQGRGSNIIHCRKDGTWSGSFHVCREMQGQCSAPNQLNSNLKLQCPDGYAIGSECAISCLDHNSESIILPVNLTVRDIPHWMNPTRVQRIVCTAGLQWYPHPALIHCVKGCEPFMGDNYCDAINNRAFCNYDGGDCCTSTVKTKKVTPFPMSCDLQNDCACRDPEAQEHNRKDLRGYSHG.

An N-terminal signal peptide occupies residues 1–22 (MRLWSWVLRLGLLSAALGCGLA). Positions 23–81 (ERPRRVRRDPRAVRPPRPAAGPATCATRAARGRRASPPPPPGGAWEAVRVPRRRQQRAA) are excised as a propeptide. The segment at 28–93 (VRRDPRAVRP…AEEPSPPSRA (66 aa)) is disordered. Low complexity predominate over residues 42-51 (AGPATCATRA). Intrachain disulfides connect Cys-141–Cys-232, Cys-324–Cys-619, Cys-329–Cys-654, Cys-411–Cys-425, Cys-421–Cys-437, Cys-454–Cys-470, Cys-471–Cys-482, Cys-580–Cys-597, Cys-584–Cys-609, Cys-707–Cys-875, Cys-710–Cys-878, Cys-750–Cys-832, Cys-772–Cys-778, Cys-944–Cys-972, Cys-957–Cys-968, Cys-980–Cys-987, and Cys-996–Cys-1008. Residues 272–583 (RGLHTPLPQL…ISEIQSCSDP (312 aa)) are metalloprotease. N-linked (GlcNAc...) asparagine glycosylation is found at Asn-387 and Asn-398. Residue Asn-426 is glycosylated (N-linked (GlcNAc...) asparagine). Asn-516 carries an N-linked (GlcNAc...) asparagine glycan. His-559 serves as a coordination point for Zn(2+). Glu-560 is a catalytic residue. The Zn(2+) site is built by His-563 and His-569. N-linked (GlcNAc...) asparagine glycans are attached at residues Asn-598, Asn-616, and Asn-722. An N-linked (GlcNAc...) asparagine glycan is attached at Asn-822. N-linked (GlcNAc...) asparagine glycosylation occurs at Asn-1023. 19 disulfide bridges follow: Cys-1033/Cys-1067, Cys-1048/Cys-1136, Cys-1189/Cys-1202, Cys-1212/Cys-1266, Cys-1224/Cys-1235, Cys-1239/Cys-1277, Cys-1282/Cys-1326, Cys-1297/Cys-1307, Cys-1311/Cys-1339, Cys-1343/Cys-1396, Cys-1359/Cys-1370, Cys-1374/Cys-1407, Cys-1412/Cys-1455, Cys-1425/Cys-1435, Cys-1439/Cys-1468, Cys-1475/Cys-1536, Cys-1489/Cys-1499, Cys-1503/Cys-1551, and Cys-1555/Cys-1573. 5 consecutive Sushi domains span residues 1210–1279 (ADCP…ACEP), 1280–1341 (VDCG…LCEL), 1342–1409 (MCLA…TCVP), 1410–1470 (VTCD…VCRE), and 1473–1553 (GQCS…HCVK). N-linked (GlcNAc...) asparagine glycosylation is found at Asn-1219 and Asn-1223. Residue Asn-1320 is glycosylated (N-linked (GlcNAc...) asparagine). N-linked (GlcNAc...) asparagine glycosylation is present at Asn-1516.

It belongs to the peptidase M43B family. In terms of assembly, homodimer; disulfide-linked. In pregnancy serum, predominantly found as a disulfide-linked 2:2 heterotetramer with the proform of PRG2. The cofactor is Zn(2+). As to expression, detected in kidney, spleen, brain, ovary, breast, skin, prostate, uterus, and placenta.

It is found in the secreted. It carries out the reaction Cleavage of the 135-Met-|-Lys-136 bond in insulin-like growth factor binding protein (IGFBP)-4, and the 143-Ser-|-Lys-144 bond in IGFBP-5.. Metalloproteinase which specifically cleaves IGFBP-4 and IGFBP-5, resulting in release of bound IGF. Cleavage of IGFBP-4 is dramatically enhanced by the presence of IGF, whereas cleavage of IGFBP-5 is slightly inhibited by the presence of IGF. Isoform 2 cleaves IGFBP-4 very slowly compared to PAPP-A, but its ability to cleave IGFBP-5 is unaffected. The sequence is that of Pappalysin-1 (Pappa) from Mus musculus (Mouse).